The primary structure comprises 1128 residues: Lysylphosphatidylglycerol biosynthesis bifunctional protein LysX (1128 aa).

A disordered region spans residues 1–47; sequence MDNPPPTGVAPRHLPPGSVHTGKVTASLSHRRPDSVQDAPPAPVPHR. The segment at 1-632 is phosphatidylglycerol lysyltransferase; that stretch reads MDNPPPTGVA…GLHADGSPPD (632 aa). 6 consecutive transmembrane segments (helical) span residues 55-75, 97-117, 121-141, 147-167, 184-204, and 240-260; these read VPHI…LWSL, APDT…AIAS, IAWW…GLRF, INAL…IAAW, GVLV…VEVF, and FVNV…VLTL. Residues 619–644 are disordered; sequence DTLTGLHADGSPPDWPKPDLLDSGPR. The segment at 633–1128 is lysine--tRNA ligase; the sequence is WPKPDLLDSG…TLPFPLVKPR (496 aa). The segment covering 634–644 has biased composition (basic and acidic residues); the sequence is PKPDLLDSGPR. Positions 1040 and 1047 each coordinate Mg(2+).

The protein in the N-terminal section; belongs to the LPG synthetase family. This sequence in the C-terminal section; belongs to the class-II aminoacyl-tRNA synthetase family. The cofactor is Mg(2+).

The protein resides in the cell membrane. It catalyses the reaction tRNA(Lys) + L-lysine + ATP = L-lysyl-tRNA(Lys) + AMP + diphosphate. It carries out the reaction L-lysyl-tRNA(Lys) + a 1,2-diacyl-sn-glycero-3-phospho-(1'-sn-glycerol) = a 1,2-diacyl-sn-glycero-3-phospho-1'-(3'-O-L-lysyl)-sn-glycerol + tRNA(Lys). Functionally, catalyzes the production of L-lysyl-tRNA(Lys)transfer and the transfer of a lysyl group from L-lysyl-tRNA(Lys) to membrane-bound phosphatidylglycerol (PG), which produces lysylphosphatidylglycerol (LPG), one of the components of the bacterial membrane with a positive net charge. LPG synthesis contributes to the resistance to cationic antimicrobial peptides (CAMPs) and likely protects M.tuberculosis against the CAMPs produced by competiting microorganisms (bacteriocins). In fact, the modification of anionic phosphatidylglycerol with positively charged L-lysine results in repulsion of the peptides. The polypeptide is Lysylphosphatidylglycerol biosynthesis bifunctional protein LysX (lysX) (Nocardia farcinica (strain IFM 10152)).